We begin with the raw amino-acid sequence, 224 residues long: Precorrin-2 dehydrogenase (224 aa).

NAD(+) is bound by residues 26 to 27 (SV) and 47 to 50 (EFSQ).

This sequence belongs to the precorrin-2 dehydrogenase / sirohydrochlorin ferrochelatase family. In terms of assembly, homodimer.

It carries out the reaction precorrin-2 + NAD(+) = sirohydrochlorin + NADH + 2 H(+). Its pathway is porphyrin-containing compound metabolism; siroheme biosynthesis; sirohydrochlorin from precorrin-2: step 1/1. Its function is as follows. Involved in the archaeal biosynthesis of heme. Catalyzes the oxiation of precorrin-2 into sirohydroclorin. The chain is Precorrin-2 dehydrogenase from Methanosarcina barkeri (strain Fusaro / DSM 804).